The chain runs to 178 residues: Caveolin-1 (178 aa).

Position 2 is an N-acetylserine (Ser2). Ser2 bears the Phosphoserine mark. The segment at 2 to 94 (SGGKYVDSEG…WKASFTTFTV (93 aa)) is required for homooligomerization. Residues 2 to 104 (SGGKYVDSEG…TKYWFYRLLS (103 aa)) are Cytoplasmic-facing. The residue at position 5 (Lys5) is an N6-acetyllysine; alternate. Residue Lys5 forms a Glycyl lysine isopeptide (Lys-Gly) (interchain with G-Cter in ubiquitin); alternate linkage. Tyr6 is subject to Phosphotyrosine. Phosphoserine is present on Ser9. Tyr14 bears the Phosphotyrosine; by ABL1 mark. The residue at position 25 (Tyr25) is a Phosphotyrosine. Glycyl lysine isopeptide (Lys-Gly) (interchain with G-Cter in ubiquitin) cross-links involve residues Lys26, Lys30, Lys39, Lys47, and Lys57. The interaction with CAVIN3 stretch occupies residues 82-94 (DGIWKASFTTFTV). Residues 105–125 (TIFGIPMALIWGIYFAILSFL) constitute an intramembrane region (helical). The Cytoplasmic segment spans residues 126-178 (HIWAVVPCIKSFLIEIQCISRVYSIYVHTFCDPLFEAIGKIFSNVRISMQKEI). The tract at residues 131-142 (VPCIKSFLIEIQ) is interacts with SPRY1, SPRY2, SPRY3 and SPRY4. S-palmitoyl cysteine attachment occurs at residues Cys133, Cys143, and Cys156. The interval 149–160 (SIYVHTFCDPLF) is interacts with SPRY1, SPRY2, and SPRY4. Residues 167–178 (FSNVRISMQKEI) form an interacts with SPRY1, SPRY2, SPRY3 and SPRY4 region.

It belongs to the caveolin family. As to quaternary structure, homooligomer. Interacts with GLIPR2. Interacts with NOSTRIN. Interacts with SNAP25 and STX1A. Interacts (via the N-terminus) with DPP4; the interaction is direct. Interacts with CTNNB1, CDH1 and JUP. Interacts with PACSIN2; this interaction induces membrane tubulation. Interacts with SLC7A9. Interacts with BMX and BTK. Interacts with TGFBR1. Interacts with CAVIN3 (via leucine-zipper domain) in a cholesterol-sensitive manner. Interacts with CAVIN1. Interacts with EHD2 in a cholesterol-dependent manner. Forms a ternary complex with UBXN6 and VCP; mediates CAV1 targeting to lysosomes for degradation. Interacts with ABCG1; this interaction regulates ABCG1-mediated cholesterol efflux. Interacts with NEU3; this interaction enhances NEU3 sialidase activity within caveola. Interacts (via C-terminus) with SPRY1, SPRY2 (via C-terminus), SPRY3, and SPRY4. Interacts with IGFBP5; this interaction allows trafficking of IGFBP5 from the plasma membrane to the nucleus. In terms of processing, phosphorylated at Tyr-14 by ABL1 in response to oxidative stress. Ubiquitinated. Undergo monoubiquitination and multi- and/or polyubiquitination. Monoubiquitination of N-terminal lysines promotes integration in a ternary complex with UBXN6 and VCP which promotes oligomeric CAV1 targeting to lysosomes for degradation. Ubiquitinated by ZNRF1; leading to degradation and modulation of the TLR4-mediated immune response.

Its subcellular location is the golgi apparatus membrane. The protein resides in the cell membrane. The protein localises to the membrane. It localises to the caveola. It is found in the membrane raft. In terms of biological role, may act as a scaffolding protein within caveolar membranes. Forms a stable heterooligomeric complex with CAV2 that targets to lipid rafts and drives caveolae formation. Mediates the recruitment of CAVIN proteins (CAVIN1/2/3/4) to the caveolae. Interacts directly with G-protein alpha subunits and can functionally regulate their activity. Involved in the costimulatory signal essential for T-cell receptor (TCR)-mediated T-cell activation. Its binding to DPP4 induces T-cell proliferation and NF-kappa-B activation in a T-cell receptor/CD3-dependent manner. Recruits CTNNB1 to caveolar membranes and may regulate CTNNB1-mediated signaling through the Wnt pathway. Negatively regulates TGFB1-mediated activation of SMAD2/3 by mediating the internalization of TGFBR1 from membrane rafts leading to its subsequent degradation. Binds 20(S)-hydroxycholesterol (20(S)-OHC). This Oryctolagus cuniculus (Rabbit) protein is Caveolin-1 (CAV1).